The sequence spans 339 residues: Phenylalanine--tRNA ligase alpha subunit (339 aa).

A Mg(2+)-binding site is contributed by glutamate 250.

It belongs to the class-II aminoacyl-tRNA synthetase family. Phe-tRNA synthetase alpha subunit type 1 subfamily. Tetramer of two alpha and two beta subunits. Mg(2+) serves as cofactor.

It is found in the cytoplasm. The enzyme catalyses tRNA(Phe) + L-phenylalanine + ATP = L-phenylalanyl-tRNA(Phe) + AMP + diphosphate + H(+). This Azobacteroides pseudotrichonymphae genomovar. CFP2 protein is Phenylalanine--tRNA ligase alpha subunit.